The primary structure comprises 855 residues: Sucrose synthase 7 (855 aa).

The GT-B glycosyltransferase stretch occupies residues 279–758 (SIFNIVIFSI…GLQRIYECYT (480 aa)).

Belongs to the glycosyltransferase 1 family. Plant sucrose synthase subfamily. In terms of tissue distribution, predominantly expressed in roots, flowers and immature seeds.

It localises to the cytoplasm. It is found in the membrane. It carries out the reaction an NDP-alpha-D-glucose + D-fructose = a ribonucleoside 5'-diphosphate + sucrose + H(+). In terms of biological role, sucrose-cleaving enzyme that provides UDP-glucose and fructose for various metabolic pathways. In Oryza sativa subsp. japonica (Rice), this protein is Sucrose synthase 7 (SUS7).